The primary structure comprises 677 residues: Vertnin (677 aa).

Disordered stretches follow at residues 356-376 (GSTG…SSPE) and 458-490 (HSGS…KLSP). Positions 458-472 (HSGSSEEGSDADKSQ) are enriched in basic and acidic residues.

It belongs to the vertnin family.

The protein localises to the nucleus. Functionally, functions as a transcriptional repressor that modulates bmp2b expression during dorsoventral patterning. The protein is Vertnin (vrtn) of Danio rerio (Zebrafish).